The chain runs to 469 residues: Citrate synthase, mitochondrial (469 aa).

The N-terminal 30 residues, methionine 1–serine 30, are a transit peptide targeting the mitochondrion. Active-site residues include histidine 304 and histidine 350. Arginine 359 provides a ligand contact to oxaloacetate. Aspartate 405 is an active-site residue. 2 residues coordinate oxaloacetate: arginine 431 and arginine 451.

Belongs to the citrate synthase family. As to quaternary structure, homodimer.

It localises to the mitochondrion matrix. It catalyses the reaction oxaloacetate + acetyl-CoA + H2O = citrate + CoA + H(+). It functions in the pathway carbohydrate metabolism; tricarboxylic acid cycle; isocitrate from oxaloacetate: step 1/2. Functionally, key enzyme of the Krebs tricarboxylic acid cycle which catalyzes the synthesis of citrate from acetyl coenzyme A and oxaloacetate. This is Citrate synthase, mitochondrial (cs) from Katsuwonus pelamis (Skipjack tuna).